The chain runs to 576 residues: Non-neuronal cytoplasmic intermediate filament protein (576 aa).

The interval 1–51 (MTSKISTTYEEEGRQSKIQPRAFVITRSGPSSKSSSFSARQSYASSRQSIT) is disordered. The interval 2-75 (TSKISTTYEE…FRGTREKEKR (74 aa)) is head. The segment covering 28-49 (SGPSSKSSSFSARQSYASSRQS) has biased composition (low complexity). Residues 73-425 (EKREMQNLNE…KLLEGEESRV (353 aa)) enclose the IF rod domain. The tract at residues 76–108 (EMQNLNERLASYIEKVHFLDAQVKKLEAENEAL) is coil 1A. Positions 109–122 (RNRKSESLQPIRDA) are linker 1. Residues 123 to 260 (YENELAQARK…DLLDQLELLK (138 aa)) form a coil 1B region. The interval 261–278 (PEPIQIKGMDYAEFWKSE) is linker 2. The tract at residues 279–425 (LSKCVREIQS…KLLEGEESRV (147 aa)) is coil 2. The tail stretch occupies residues 426–576 (GLRSLVEQAI…KATLIAKFSG (151 aa)). Residues 456–574 (GSMTIQRSSK…NEKATLIAKF (119 aa)) enclose the LTD domain.

This sequence belongs to the intermediate filament family. As to quaternary structure, can form homopolymers.

Its subcellular location is the cytoplasm. This Cornu aspersum (Brown garden snail) protein is Non-neuronal cytoplasmic intermediate filament protein.